The following is a 553-amino-acid chain: 5'-nucleotidase (553 aa).

The first 21 residues, 1–21 (MKQGLILKSVLSAAIIASLAG), serve as a signal peptide directing secretion. Residue Cys-22 is the site of N-palmitoyl cysteine attachment. Residue Cys-22 is the site of S-diacylglycerol cysteine attachment. A divalent metal cation contacts are provided by Asp-45, His-47, Asp-88, Asn-120, His-221, His-256, and Gln-258. Substrate-binding positions include Phe-432 and 501-507 (FNAAGGD).

The protein belongs to the 5'-nucleotidase family. Chloride is required as a cofactor. The cofactor is Mg(2+).

The protein localises to the cell outer membrane. The catalysed reaction is a ribonucleoside 5'-phosphate + H2O = a ribonucleoside + phosphate. In terms of biological role, degradation of extracellular 5'-nucleotides for nutritional needs. This chain is 5'-nucleotidase (nutA), found in Vibrio cholerae serotype O1 (strain ATCC 39315 / El Tor Inaba N16961).